Reading from the N-terminus, the 658-residue chain is Integrator complex subunit 9 (658 aa).

A disordered region spans residues Lys550–Asp574. The short motif at Lys566 to Arg570 is the Nuclear localization signal element.

This sequence belongs to the metallo-beta-lactamase superfamily. RNA-metabolizing metallo-beta-lactamase-like family. INTS9 subfamily. As to quaternary structure, component of the Integrator complex, composed of core subunits INTS1, INTS2, INTS3, INTS4, INTS5, INTS6, INTS7, INTS8, INTS9/RC74, INTS10, INTS11/CPSF3L, INTS12, INTS13, INTS14 and INTS15. The core complex associates with protein phosphatase 2A subunits PPP2CA and PPP2R1A, to form the Integrator-PP2A (INTAC) complex. INTS9 is part of the RNA endonuclease subcomplex, composed of INTS4, INTS9, INTS11 and inositol hexakisphosphate (InsP6).

Its subcellular location is the nucleus. It localises to the cytoplasm. Component of the integrator complex, a multiprotein complex that terminates RNA polymerase II (Pol II) transcription in the promoter-proximal region of genes. The integrator complex provides a quality checkpoint during transcription elongation by driving premature transcription termination of transcripts that are unfavorably configured for transcriptional elongation: the complex terminates transcription by (1) catalyzing dephosphorylation of the C-terminal domain (CTD) of Pol II subunit POLR2A/RPB1 and SUPT5H/SPT5, (2) degrading the exiting nascent RNA transcript via endonuclease activity and (3) promoting the release of Pol II from bound DNA. The integrator complex is also involved in terminating the synthesis of non-coding Pol II transcripts, such as enhancer RNAs (eRNAs), small nuclear RNAs (snRNAs), telomerase RNAs and long non-coding RNAs (lncRNAs). This is Integrator complex subunit 9 (INTS9) from Gallus gallus (Chicken).